Reading from the N-terminus, the 223-residue chain is Regulator of G-protein signaling 19 (223 aa).

The segment at 1-30 (MPTPPEAEKQQTGPEEADQPPSMSSHDAAP) is disordered. A compositionally biased stretch (low complexity) spans 20-29 (PPSMSSHDAA). A phosphoserine mark is found at Ser-24 and Ser-103. In terms of domain architecture, RGS spans 96-212 (SFDKLMHSPA…LSSPAYRALL (117 aa)). Phosphoserine; by MAPK1 and MAPK3 is present on Ser-157. Residues 213–223 (LQGASQSSSEA) are interaction with GIPC.

In terms of assembly, interacts with GIPC PDZ domain. Interacts with GNAO1. In terms of processing, fatty acylated. Heavily palmitoylated in the cysteine string motif. Post-translationally, phosphorylated, mainly on serine residues.

The protein resides in the membrane. In terms of biological role, inhibits signal transduction by increasing the GTPase activity of G protein alpha subunits thereby driving them into their inactive GDP-bound form. Binds to G-alpha subfamily 1 members, with the order G(i)a3 &gt; G(i)a1 &gt; G(o)a &gt;&gt; G(z)a/G(i)a2. Activity on G(z)-alpha is inhibited by phosphorylation and palmitoylation of the G-protein. The chain is Regulator of G-protein signaling 19 (RGS19) from Bos taurus (Bovine).